The primary structure comprises 298 residues: Transcription factor BOA (298 aa).

Disordered regions lie at residues Met1 to Ile26, Leu79 to Arg143, and Glu206 to Ser232. Residues Tyr10–Gly20 show a composition bias toward acidic residues. Positions Asp104–Gly113 are enriched in basic and acidic residues. Residues Ser122–Pro131 show a composition bias toward acidic residues. The segment at residues Thr138 to Lys197 is a DNA-binding region (myb-like GARP). Over residues Tyr209–Gln227 the composition is skewed to polar residues.

It is found in the nucleus. Transcription factor that is a critical component of the regulatory circuit of the circadian clock. Binds to specific sites on CCA1 promoter leading to CCA1 activation. Is required for the rhythmic expression of other clock genes such as LHY, GI and APRR1/TOC1. The chain is Transcription factor BOA (BOA) from Arabidopsis thaliana (Mouse-ear cress).